Consider the following 157-residue polypeptide: 3-hydroxyacyl-[acyl-carrier-protein] dehydratase FabZ (157 aa).

Residue His58 is part of the active site.

The protein belongs to the thioester dehydratase family. FabZ subfamily.

It is found in the cytoplasm. It carries out the reaction a (3R)-hydroxyacyl-[ACP] = a (2E)-enoyl-[ACP] + H2O. Functionally, involved in unsaturated fatty acids biosynthesis. Catalyzes the dehydration of short chain beta-hydroxyacyl-ACPs and long chain saturated and unsaturated beta-hydroxyacyl-ACPs. The polypeptide is 3-hydroxyacyl-[acyl-carrier-protein] dehydratase FabZ (Rhizorhabdus wittichii (strain DSM 6014 / CCUG 31198 / JCM 15750 / NBRC 105917 / EY 4224 / RW1) (Sphingomonas wittichii)).